The following is a 905-amino-acid chain: Protein translocase subunit SecA (905 aa).

ATP is bound by residues glutamine 87, 105–109 (GEGKT), and aspartate 512. A disordered region spans residues 836 to 905 (DVDAVDEQRK…KKYKHCHGKL (70 aa)). Residues 841 to 858 (DEQRKAADSAPREFRHEQ) show a composition bias toward basic and acidic residues. Residues cysteine 890, cysteine 892, cysteine 901, and histidine 902 each coordinate Zn(2+). Residues 896 to 905 (KKYKHCHGKL) are compositionally biased toward basic residues.

Belongs to the SecA family. In terms of assembly, monomer and homodimer. Part of the essential Sec protein translocation apparatus which comprises SecA, SecYEG and auxiliary proteins SecDF-YajC and YidC. Zn(2+) serves as cofactor.

Its subcellular location is the cell inner membrane. It is found in the cytoplasm. The enzyme catalyses ATP + H2O + cellular proteinSide 1 = ADP + phosphate + cellular proteinSide 2.. Functionally, part of the Sec protein translocase complex. Interacts with the SecYEG preprotein conducting channel. Has a central role in coupling the hydrolysis of ATP to the transfer of proteins into and across the cell membrane, serving both as a receptor for the preprotein-SecB complex and as an ATP-driven molecular motor driving the stepwise translocation of polypeptide chains across the membrane. The protein is Protein translocase subunit SecA of Idiomarina loihiensis (strain ATCC BAA-735 / DSM 15497 / L2-TR).